The chain runs to 271 residues: ATP synthase subunit a (271 aa).

The next 5 helical transmembrane spans lie at 38-58 (FWTL…LFLA), 100-120 (VIAP…LMDL), 146-166 (DVNI…FYSI), 211-231 (LFGN…LLPW), and 242-262 (AIFH…LTIV).

This sequence belongs to the ATPase A chain family. As to quaternary structure, F-type ATPases have 2 components, CF(1) - the catalytic core - and CF(0) - the membrane proton channel. CF(1) has five subunits: alpha(3), beta(3), gamma(1), delta(1), epsilon(1). CF(0) has three main subunits: a(1), b(2) and c(9-12). The alpha and beta chains form an alternating ring which encloses part of the gamma chain. CF(1) is attached to CF(0) by a central stalk formed by the gamma and epsilon chains, while a peripheral stalk is formed by the delta and b chains.

It localises to the cell inner membrane. Its function is as follows. Key component of the proton channel; it plays a direct role in the translocation of protons across the membrane. This is ATP synthase subunit a from Klebsiella pneumoniae (strain 342).